We begin with the raw amino-acid sequence, 219 residues long: Cytochrome c oxidase assembly protein CtaG (219 aa).

Over residues 1 to 13 the composition is skewed to polar residues; that stretch reads MDATDQGKSTSTT. Residues 1–24 form a disordered region; sequence MDATDQGKSTSTTAAQAAPGKAAP. The Cytoplasmic segment spans residues 1–29; that stretch reads MDATDQGKSTSTTAAQAAPGKAAPRRGIG. Residues 14–24 show a composition bias toward low complexity; the sequence is AAQAAPGKAAP. Residues 30–52 form a helical; Signal-anchor for type II membrane protein membrane-spanning segment; the sequence is RDALVGGICGAVVVLMIGASYAA. Over 53-219 the chain is Periplasmic; sequence VPFYNWFCRA…GEPDKPRGSL (167 aa).

It belongs to the COX11/CtaG family.

Its subcellular location is the cell inner membrane. Its function is as follows. Exerts its effect at some terminal stage of cytochrome c oxidase synthesis, probably by being involved in the insertion of the copper B into subunit I. This chain is Cytochrome c oxidase assembly protein CtaG, found in Bradyrhizobium sp. (strain ORS 278).